The primary structure comprises 353 residues: Histidinol-phosphate aminotransferase (353 aa).

Lys209 carries the post-translational modification N6-(pyridoxal phosphate)lysine.

Belongs to the class-II pyridoxal-phosphate-dependent aminotransferase family. Histidinol-phosphate aminotransferase subfamily. In terms of assembly, homodimer. The cofactor is pyridoxal 5'-phosphate.

The enzyme catalyses L-histidinol phosphate + 2-oxoglutarate = 3-(imidazol-4-yl)-2-oxopropyl phosphate + L-glutamate. It participates in amino-acid biosynthesis; L-histidine biosynthesis; L-histidine from 5-phospho-alpha-D-ribose 1-diphosphate: step 7/9. This is Histidinol-phosphate aminotransferase from Buchnera aphidicola subsp. Cinara cedri (strain Cc).